The sequence spans 381 residues: Chorismate synthase (381 aa).

R41 and R47 together coordinate NADP(+). Residues 127–129 (RAS), 247–248 (QA), G291, 306–310 (KPIPT), and R332 contribute to the FMN site.

Belongs to the chorismate synthase family. Homotetramer. Requires FMNH2 as cofactor.

It catalyses the reaction 5-O-(1-carboxyvinyl)-3-phosphoshikimate = chorismate + phosphate. Its pathway is metabolic intermediate biosynthesis; chorismate biosynthesis; chorismate from D-erythrose 4-phosphate and phosphoenolpyruvate: step 7/7. Its function is as follows. Catalyzes the anti-1,4-elimination of the C-3 phosphate and the C-6 proR hydrogen from 5-enolpyruvylshikimate-3-phosphate (EPSP) to yield chorismate, which is the branch point compound that serves as the starting substrate for the three terminal pathways of aromatic amino acid biosynthesis. This reaction introduces a second double bond into the aromatic ring system. The sequence is that of Chorismate synthase from Anaeromyxobacter sp. (strain K).